The primary structure comprises 160 residues: Putative 4-hydroxy-4-methyl-2-oxoglutarate aldolase (160 aa).

Substrate is bound by residues 75–78 (GDLI) and Arg97. Asp98 contacts a divalent metal cation.

Belongs to the class II aldolase/RraA-like family. In terms of assembly, homotrimer. A divalent metal cation serves as cofactor.

The enzyme catalyses 4-hydroxy-4-methyl-2-oxoglutarate = 2 pyruvate. The catalysed reaction is oxaloacetate + H(+) = pyruvate + CO2. Its function is as follows. Catalyzes the aldol cleavage of 4-hydroxy-4-methyl-2-oxoglutarate (HMG) into 2 molecules of pyruvate. Also contains a secondary oxaloacetate (OAA) decarboxylase activity due to the common pyruvate enolate transition state formed following C-C bond cleavage in the retro-aldol and decarboxylation reactions. The chain is Putative 4-hydroxy-4-methyl-2-oxoglutarate aldolase from Rhodospirillum centenum (strain ATCC 51521 / SW).